The chain runs to 272 residues: HMP-PP phosphatase (272 aa).

Asp-8 (nucleophile) is an active-site residue. Residues Asp-8, Asp-10, and Asp-212 each contribute to the Mg(2+) site.

The protein belongs to the HAD-like hydrolase superfamily. Cof family. Mg(2+) serves as cofactor.

The enzyme catalyses 4-amino-2-methyl-5-(diphosphooxymethyl)pyrimidine + H2O = 4-amino-2-methyl-5-(phosphooxymethyl)pyrimidine + phosphate + H(+). Functionally, catalyzes the hydrolysis of 4-amino-2-methyl-5-hydroxymethylpyrimidine pyrophosphate (HMP-PP) to 4-amino-2-methyl-5-hydroxymethylpyrimidine phosphate (HMP-P). In Escherichia coli (strain 55989 / EAEC), this protein is HMP-PP phosphatase.